The following is a 1419-amino-acid chain: Collagen alpha-1(II) chain (1419 aa).

The N-terminal stretch at 1–25 is a signal peptide; the sequence is MIRLGAPQSLVLLTLLIATVLQCQG. The propeptide at 26-113 is N-terminal propeptide; it reads QDARKLGPKG…PGLGGGNFAA (88 aa). A disordered region spans residues 28–1168; that stretch reads ARKLGPKGQK…GQREKGPDPL (1141 aa). Composition is skewed to basic and acidic residues over residues 36–47 and 64–85; these read QKGEPGDIKDII and PRGD…RDGE. Over residues 89–104 the composition is skewed to pro residues; it reads PGNPGPPGPPGPPGPP. Residue Lys-122 is modified to 5-hydroxylysine. Lys-122 carries an O-linked (Gal...) hydroxylysine glycan. The segment covering 124-135 has biased composition (low complexity); sequence GGAQMGVMQGPM. A triple-helical region region spans residues 133–1146; sequence GPMGPMGPRG…PGPPGPPGPP (1014 aa). Positions 140–149 are enriched in pro residues; that stretch reads PRGPPGPAGA. Residues 150 to 171 are compositionally biased toward low complexity; it reads PGPQGFQGNPGEPGEPGVSGPI. The span at 183–197 shows a compositional bias: basic and acidic residues; sequence PGDDGEAGKPGKAGE. Lys-219, Lys-231, and Lys-240 each carry 5-hydroxylysine. 3 O-linked (Gal...) hydroxylysine glycosylation sites follow: Lys-219, Lys-231, and Lys-240. Low complexity-rich tracts occupy residues 242-252 and 267-282; these read ESGSPGENGSP and TGPA…DGQP. Over residues 292-301 the composition is skewed to gly residues; it reads GPAGGPGFLG. The residue at position 306 (Lys-306) is a 5-hydroxylysine. Residue Lys-306 is glycosylated (O-linked (Gal...) hydroxylysine). The segment covering 335–363 has biased composition (low complexity); sequence PAGASGNPGTDGIPGAKGSAGAPGIAGAP. Residues 365-374 show a composition bias toward pro residues; the sequence is FPGPRGPPGP. The span at 404-417 shows a compositional bias: low complexity; that stretch reads ETGPAGPQGAPGPA. A 5-hydroxylysine mark is found at Lys-540 and Lys-552. Lys-540 and Lys-552 each carry an O-linked (Gal...) hydroxylysine glycan. Positions 554 to 563 are enriched in low complexity; the sequence is LAGAPGLRGL. 4-hydroxyproline occurs at positions 591 and 600. Pro-602 carries the post-translational modification 3-hydroxyproline; partial. 2 positions are modified to 4-hydroxyproline: Pro-603 and Pro-606. Residues 638–668 are compositionally biased toward low complexity; it reads ERGSPGAQGLQGPRGLPGTPGTDGPKGAAGP. Residues 696 to 707 show a composition bias toward basic and acidic residues; sequence KGDRGDVGEKGP. Composition is skewed to low complexity over residues 765-780 and 809-846; these read AGFA…PGAK and PTGV…NGNP. Position 839 is a 3-hydroxyproline; partial (Pro-839). 3 positions are modified to 4-hydroxyproline: Pro-840, Pro-846, and Pro-852. Residues 1001–1011 show a composition bias toward pro residues; sequence APGPPGSPGPA. Basic and acidic residues predominate over residues 1047–1061; that stretch reads RGDKGEAGEPGERGL. Pro-1076 is subject to 3-hydroxyproline; partial. 2 stretches are compositionally biased toward low complexity: residues 1080–1089 and 1103–1113; these read SGDQGTSGPA and PSGKDGSNGIP. A 4-hydroxyproline modification is found at Pro-1113. Pro-1118 bears the 3-hydroxyproline mark. Pro-1119 is modified (4-hydroxyproline). The span at 1131–1148 shows a compositional bias: pro residues; it reads AGPPGNPGPPGPPGPPGP. The residue at position 1133 (Pro-1133) is a 3-hydroxyproline; partial. 2 positions are modified to 4-hydroxyproline: Pro-1134 and Pro-1137. At Pro-1139 the chain carries 3-hydroxyproline; partial. A 4-hydroxyproline mark is found at Pro-1140 and Pro-1143. Pro-1145 bears the 3-hydroxyproline; partial mark. The residue at position 1146 (Pro-1146) is a 4-hydroxyproline. A nonhelical region (C-terminal) region spans residues 1147-1173; that stretch reads GPGIDMSAFAGLGQREKGPDPLQYMRA. One can recognise a Fibrillar collagen NC1 domain in the interval 1185–1419; sequence VEVDATLKSL…GVDIGPVCFL (235 aa). Intrachain disulfides connect Cys-1215–Cys-1247, Cys-1255–Cys-1417, and Cys-1325–Cys-1370. The Ca(2+) site is built by Asp-1233, Asn-1235, Gln-1236, Cys-1238, and Asp-1241. Asn-1320 carries an N-linked (GlcNAc...) asparagine glycan.

It belongs to the fibrillar collagen family. As to quaternary structure, homotrimers of alpha 1(II) chains. Contains mostly 4-hydroxyproline. Prolines at the third position of the tripeptide repeating unit (G-X-P) are 4-hydroxylated in some or all of the chains. In terms of processing, contains 3-hydroxyproline at a few sites. This modification occurs on the first proline residue in the sequence motif Gly-Pro-Hyp, where Hyp is 4-hydroxyproline. Post-translationally, lysine residues at the third position of the tripeptide repeating unit (G-X-Y) are 5-hydroxylated in some or all of the chains. O-glycosylated on hydroxylated lysine residues. The O-linked glycan consists of a Glc-Gal disaccharide. As to expression, expressed in chondrocytes.

The protein resides in the secreted. It is found in the extracellular space. Its subcellular location is the extracellular matrix. In terms of biological role, type II collagen is specific for cartilaginous tissues. It is essential for the normal embryonic development of the skeleton, for linear growth and for the ability of cartilage to resist compressive forces. This is Collagen alpha-1(II) chain from Rattus norvegicus (Rat).